The following is a 453-amino-acid chain: Lysine histidine transporter-like 1 (453 aa).

Residues 1–44 (MYIQMTDGVPPPPEQSSLDHRIDELERQKEIDDWLPITSSRNAK) are Cytoplasmic-facing. 2 consecutive transmembrane segments (helical) span residues 45–65 (WWYS…LGLP) and 66–86 (FFMA…SWII). Residues 87-122 (TLYTLWQMVEMHEMVPGKRFDRYHELGQFAFGERLG) lie on the Cytoplasmic side of the membrane. A helical transmembrane segment spans residues 123 to 143 (LYIIVPQQIIVEVGVCIVYMV). Over 144-164 (TGGQSLKKFHEIACQDCSPIR) the chain is Extracellular. Residues 165 to 185 (LSFFIMIFASSHFVLSHLPNF) traverse the membrane as a helical segment. Over 186–187 (NS) the chain is Cytoplasmic. The chain crosses the membrane as a helical span at residues 188 to 208 (ISGVSLVAAVMSLSYSTIAWT). The Extracellular portion of the chain corresponds to 209 to 231 (ATAAKGVQEDVQYGYKSGTTAST). Residues 232–252 (VLSFFTGLGGIAFAYAGHNVV) traverse the membrane as a helical segment. Topologically, residues 253–276 (LEIQATIPSTPSNPSKGPMWRGVV) are cytoplasmic. The helical transmembrane segment at 277–297 (VAYVVVALCYFPVALVGYGVF) threads the bilayer. At 298–318 (GNAVLDNVLMSLETPVWAIAT) the chain is on the extracellular side. A helical transmembrane segment spans residues 319–339 (ANLFVVMHVIGSYQIFAMPVF). The Cytoplasmic segment spans residues 340 to 359 (DMVETFLVKKLNFKPSTVLR). A helical membrane pass occupies residues 360–382 (FIVRNVYVALTMFIGIMIPFFGG). Topologically, residues 383-385 (LLA) are extracellular. A helical membrane pass occupies residues 386 to 408 (FFGGFAFAPTSYFLPCIMWLLIY). At 409–412 (KPKR) the chain is on the cytoplasmic side. A helical membrane pass occupies residues 413 to 433 (FSLSWWTNWVCIVLGVVLMIL). Over 434–453 (SSIGGLRQIIIQSKDYSFFS) the chain is Extracellular.

Belongs to the amino acid/polyamine transporter 2 family. Amino acid/auxin permease (AAAP) (TC 2.A.18.2) subfamily.

The protein resides in the cell membrane. In terms of biological role, amino acid transporter. This is Lysine histidine transporter-like 1 from Arabidopsis thaliana (Mouse-ear cress).